Reading from the N-terminus, the 448-residue chain is Ribulose bisphosphate carboxylase large chain (448 aa).

N6,N6,N6-trimethyllysine is present on K4. Residues N113 and T163 each coordinate substrate. Residue K165 is the Proton acceptor of the active site. Residue K167 participates in substrate binding. Positions 191, 193, and 194 each coordinate Mg(2+). K191 carries the N6-carboxylysine modification. H284 serves as the catalytic Proton acceptor. Substrate contacts are provided by R285, H317, and S369.

This sequence belongs to the RuBisCO large chain family. Type I subfamily. In terms of assembly, heterohexadecamer of 8 large chains and 8 small chains; disulfide-linked. The disulfide link is formed within the large subunit homodimers. Mg(2+) serves as cofactor. The disulfide bond which can form in the large chain dimeric partners within the hexadecamer appears to be associated with oxidative stress and protein turnover.

The protein resides in the plastid. The protein localises to the chloroplast. The catalysed reaction is 2 (2R)-3-phosphoglycerate + 2 H(+) = D-ribulose 1,5-bisphosphate + CO2 + H2O. The enzyme catalyses D-ribulose 1,5-bisphosphate + O2 = 2-phosphoglycolate + (2R)-3-phosphoglycerate + 2 H(+). Functionally, ruBisCO catalyzes two reactions: the carboxylation of D-ribulose 1,5-bisphosphate, the primary event in carbon dioxide fixation, as well as the oxidative fragmentation of the pentose substrate in the photorespiration process. Both reactions occur simultaneously and in competition at the same active site. This is Ribulose bisphosphate carboxylase large chain from Eucryphia lucida (Leatherwood).